The chain runs to 805 residues: Phosphoinositide 3-kinase adapter protein 1 (805 aa).

The 138-residue stretch at 8–145 (RGCDILIVYS…AVKKAISEDS (138 aa)) folds into the TIR domain. Residues 10-144 (CDILIVYSPD…AAVKKAISED (135 aa)) form a necessary and sufficient to mediate inhibition of NF-kappa-B downstream of activated TLRs; may mediate interaction with MYD88 and TIRAP region. A disordered region spans residues 145–165 (SGCDSVTDTEPEDEKVVSYSK). In terms of domain architecture, DBB spans 181–317 (VQPDRIRCGA…NIPASGLHLF (137 aa)). Position 263 is a phosphotyrosine (Tyr-263). Tyr-419, Tyr-444, and Tyr-459 each carry phosphotyrosine; by SYK. Tyr-513 carries the phosphotyrosine; by ABL1 modification. Positions 527 to 547 (ASRPPVPVPRPETTAPGAHQL) are disordered. Phosphotyrosine; by ABL1 occurs at positions 553 and 570. A disordered region spans residues 571 to 590 (VSSESIRKGPPVRPWRDRPQ). A Phosphotyrosine; by ABL1 modification is found at Tyr-594. Ser-642 carries the phosphoserine modification. The stretch at 645–667 (FQQENLKRLRDSITRRQREKQKS) forms a coiled coil. The segment covering 654 to 672 (RDSITRRQREKQKSGKQTD) has biased composition (basic and acidic residues). Residues 654 to 679 (RDSITRRQREKQKSGKQTDLEITVPI) form a disordered region. Position 694 is a phosphotyrosine; by ABL1 (Tyr-694). A disordered region spans residues 697–805 (GPRKSVIPPR…PPPPVPPRGR (109 aa)). Positions 707 to 716 (TELRRGDWKT) are enriched in basic and acidic residues. Over residues 717 to 740 (DSTSSTASSTSNRSSTRSLLSVSS) the composition is skewed to low complexity. The residue at position 718 (Ser-718) is a Phosphoserine. Pro residues predominate over residues 795–805 (HPPPPVPPRGR).

In terms of assembly, homooligomer. Interacts (phosphorylated on tyrosine residues within YXXM motifs) with PIK3R1 (via SH2 domain); required for BCR- and TLR-mediated activation of phosphoinositide 3-kinase. Interacts (via polyproline C-terminal region) with ABI1 (via SH3 domain); the interaction promotes phosphorylation of PIK3AP1 by ABL1. May interact with MYD88 and TIRAP. In terms of processing, constitutively phosphorylated. Phosphorylated on tyrosine residues in C-terminal region by ABL1. Phosphorylated on tyrosine residues within the YXXM motifs by BTK and SYK. Isoform 1 and isoform 2 are phosphorylated on tyrosine residues, most likely within the YXXM motifs, via CD19 activation. Toll-like receptor activation induces appearance of a phosphorylated form associated with membranes. Expressed in natural killer (NK) cells.

It is found in the cytoplasm. It localises to the cell membrane. Its function is as follows. Signaling adapter that contributes to B-cell development by linking B-cell receptor (BCR) signaling to the phosphoinositide 3-kinase (PI3K)-Akt signaling pathway. Has a complementary role to the BCR coreceptor CD19, coupling BCR and PI3K activation by providing a docking site for the PI3K subunit PIK3R1. Alternatively, links Toll-like receptor (TLR) signaling to PI3K activation, a process preventing excessive inflammatory cytokine production. Also involved in the activation of PI3K in natural killer cells. May be involved in the survival of mature B-cells via activation of REL. This chain is Phosphoinositide 3-kinase adapter protein 1 (PIK3AP1), found in Homo sapiens (Human).